The primary structure comprises 139 residues: Peptide methionine sulfoxide reductase B4 (139 aa).

At alanine 2 the chain carries N-acetylalanine. The region spanning 12–133 (EEEWRAVLSP…NSVSINFNPA (122 aa)) is the MsrB domain. Zn(2+) contacts are provided by cysteine 51, cysteine 54, cysteine 97, and cysteine 100. A disulfide bridge links cysteine 69 with cysteine 122. Cysteine 122 serves as the catalytic Nucleophile.

The protein belongs to the MsrB Met sulfoxide reductase family. It depends on Zn(2+) as a cofactor.

The protein localises to the cytoplasm. It is found in the cytosol. It carries out the reaction L-methionyl-[protein] + [thioredoxin]-disulfide + H2O = L-methionyl-(R)-S-oxide-[protein] + [thioredoxin]-dithiol. Its function is as follows. Catalyzes the reduction of methionine sulfoxide (MetSO) to methionine in proteins. Plays a protective role against oxidative stress by restoring activity to proteins that have been inactivated by methionine oxidation. MSRB family specifically reduces the MetSO R-enantiomer. This is Peptide methionine sulfoxide reductase B4 (MSRB4) from Arabidopsis thaliana (Mouse-ear cress).